Reading from the N-terminus, the 89-residue chain is MAISKEKKQEIIAQYARKEGDTGSPEVQIAVLTWEINHLNDHIKSHKKDHATQRGLMKKIGHRRNLLGYLRGKDVQRYRELIASLGLRR.

The protein belongs to the universal ribosomal protein uS15 family. Part of the 30S ribosomal subunit. Forms a bridge to the 50S subunit in the 70S ribosome, contacting the 23S rRNA.

Functionally, one of the primary rRNA binding proteins, it binds directly to 16S rRNA where it helps nucleate assembly of the platform of the 30S subunit by binding and bridging several RNA helices of the 16S rRNA. Its function is as follows. Forms an intersubunit bridge (bridge B4) with the 23S rRNA of the 50S subunit in the ribosome. This is Small ribosomal subunit protein uS15 from Lactococcus lactis subsp. lactis (strain IL1403) (Streptococcus lactis).